The following is a 203-amino-acid chain: Enterotoxin-like toxin X (203 aa).

The segment at 164 to 180 is sialic acid-binding motif; the sequence is YTLESHKELQKNRENVE.

This sequence belongs to the staphylococcal/streptococcal toxin family.

The protein resides in the secreted. Its function is as follows. Plays a role in the inhibition of the host innate immune system. Inhibits phagocytosis and killing by human neutrophils by interacting with multiple neutrophil surface glycoproteins in a sialic acid-dependent manner. In Staphylococcus aureus, this protein is Enterotoxin-like toxin X.